The chain runs to 145 residues: 6-pyruvoyl tetrahydrobiopterin synthase (145 aa).

Phosphoserine; by PKG is present on Ser19. His24 is a binding site for Zn(2+). At Ser28 the chain carries Phosphoserine. The active-site Proton acceptor is the Cys43. The Zn(2+) site is built by His49 and His51. Residue His90 is the Charge relay system of the active site. Tyr128 is modified (phosphotyrosine). Catalysis depends on Glu134, which acts as the Charge relay system.

The protein belongs to the PTPS family. As to quaternary structure, homohexamer formed of two homotrimers in a head to head fashion. Requires Zn(2+) as cofactor. In terms of processing, phosphorylation of Ser-19 is required for maximal enzyme activity.

The enzyme catalyses 7,8-dihydroneopterin 3'-triphosphate = 6-pyruvoyl-5,6,7,8-tetrahydropterin + triphosphate + H(+). It participates in cofactor biosynthesis; tetrahydrobiopterin biosynthesis; tetrahydrobiopterin from 7,8-dihydroneopterin triphosphate: step 1/3. Involved in the biosynthesis of tetrahydrobiopterin, an essential cofactor of aromatic amino acid hydroxylases. Catalyzes the transformation of 7,8-dihydroneopterin triphosphate into 6-pyruvoyl tetrahydropterin. The polypeptide is 6-pyruvoyl tetrahydrobiopterin synthase (PTS) (Homo sapiens (Human)).